A 146-amino-acid chain; its full sequence is Anti-sigma F factor (146 aa).

The protein belongs to the anti-sigma-factor family.

It catalyses the reaction L-seryl-[protein] + ATP = O-phospho-L-seryl-[protein] + ADP + H(+). The catalysed reaction is L-threonyl-[protein] + ATP = O-phospho-L-threonyl-[protein] + ADP + H(+). In terms of biological role, binds to sigma F and blocks its ability to form an RNA polymerase holoenzyme (E-sigma F). Phosphorylates SpoIIAA on a serine residue. This phosphorylation may enable SpoIIAA to act as an anti-anti-sigma factor that counteracts SpoIIAB and thus releases sigma F from inhibition. This Bacillus licheniformis (strain ATCC 14580 / DSM 13 / JCM 2505 / CCUG 7422 / NBRC 12200 / NCIMB 9375 / NCTC 10341 / NRRL NRS-1264 / Gibson 46) protein is Anti-sigma F factor.